The chain runs to 226 residues: Thaumatin-like protein (226 aa).

Positions 1–24 (MNFSKNLPLLVSLWAITFFAYTHA) are cleaved as a signal peptide. 8 disulfide bridges follow: C33/C225, C74/C84, C89/C95, C140/C214, C145/C197, C153/C163, C167/C176, and C177/C184.

It belongs to the thaumatin family. Expressed in fruits.

It is found in the secreted. 3D-structure modeling suggests it may have endo-(1,3)-beta-glucanase activity. The protein is Thaumatin-like protein of Olea europaea (Common olive).